Reading from the N-terminus, the 299-residue chain is Leucine zipper transcription factor-like protein 1 (299 aa).

A coiled-coil region spans residues 96–296 (LKLQTDISEL…DLRKRLAQYE (201 aa)). The tract at residues 145 to 299 (GTAELLNKEI…KRLAQYEPED (155 aa)) is interaction with BSS9.

It belongs to the LZTFL1 family. Self-associates. Interacts with BBS9; the interaction mediates the association of LZTL1 with the BBsome complex and regulates BBSome ciliary trafficking.

The protein resides in the cytoplasm. In terms of biological role, regulates ciliary localization of the BBSome complex. Together with the BBSome complex, controls SMO ciliary trafficking and contributes to the sonic hedgehog (SHH) pathway regulation. May play a role in neurite outgrowth. May have tumor suppressor function. This Pongo abelii (Sumatran orangutan) protein is Leucine zipper transcription factor-like protein 1 (LZTFL1).